Here is an 84-residue protein sequence, read N- to C-terminus: MILMVKAIVDITDENNRIINIVKAKYNLRDKSQAINKIIEEYAEFLLEDELKPEYIEKIRNIMKNEKPIYIGSIENLKKRYLGE.

Its function is as follows. Antitoxin component of a type II toxin-antitoxin (TA) system. Its cognate toxin is RelE4 (Potential). The chain is Putative antitoxin RelB4 (relB4) from Methanocaldococcus jannaschii (strain ATCC 43067 / DSM 2661 / JAL-1 / JCM 10045 / NBRC 100440) (Methanococcus jannaschii).